Consider the following 33-residue polypeptide: Gaegurin-1 (33 aa).

C27 and C33 are disulfide-bonded.

This sequence belongs to the frog skin active peptide (FSAP) family. Brevinin subfamily. As to quaternary structure, monomer. In terms of tissue distribution, expressed by the skin glands.

It localises to the secreted. Functionally, has a non-hemolytic activity. Has a broad spectrum of activity against both Gram-positive and Gram-negative bacteria, fungi and protozoa. In Glandirana rugosa (Japanese wrinkled frog), this protein is Gaegurin-1 (GGN1).